Here is a 466-residue protein sequence, read N- to C-terminus: Neuropeptide Y receptor type 5 (466 aa).

The Extracellular segment spans residues M1 to Y63. 4 N-linked (GlcNAc...) asparagine glycosylation sites follow: N10, N17, N38, and N39. A helical transmembrane segment spans residues F64–L84. At M85–N98 the chain is on the cytoplasmic side. Residues F99 to T119 form a helical membrane-spanning segment. The Extracellular portion of the chain corresponds to L120–M138. C135 and C219 are joined by a disulfide. A helical transmembrane segment spans residues P139 to V159. Residues R160 to G177 lie on the Cytoplasmic side of the membrane. Residues Y178–F198 traverse the membrane as a helical segment. The Extracellular segment spans residues H199–R229. Residues I230–V250 traverse the membrane as a helical segment. The Cytoplasmic portion of the chain corresponds to S251–R389. The segment at G323 to S346 is disordered. Residues L390–V410 form a helical membrane-spanning segment. At T411–Y427 the chain is on the extracellular side. Residues C428 to L448 form a helical membrane-spanning segment. Residues N449–S466 are Cytoplasmic-facing. C462 carries the S-palmitoyl cysteine lipid modification.

It belongs to the G-protein coupled receptor 1 family.

It localises to the cell membrane. Functionally, receptor for neuropeptide Y and peptide YY. The activity of this receptor is mediated by G proteins that inhibit adenylate cyclase activity. Seems to be associated with food intake. Could be involved in feeding disorders. This Mus musculus (Mouse) protein is Neuropeptide Y receptor type 5 (Npy5r).